Reading from the N-terminus, the 99-residue chain is Plastocyanin B'/B'' (99 aa).

One can recognise a Plastocyanin-like domain in the interval 1–99 (IEVLLGSDDG…AGMVGKVTVN (99 aa)). His-37, Cys-84, His-87, and Met-92 together coordinate Cu cation.

This sequence belongs to the plastocyanin family. The cofactor is Cu(2+).

The protein localises to the plastid. It localises to the chloroplast thylakoid membrane. Participates in electron transfer between P700 and the cytochrome b6-f complex in photosystem I. The polypeptide is Plastocyanin B'/B'' (Nicotiana tabacum (Common tobacco)).